The primary structure comprises 473 residues: Glutamate--tRNA ligase 1 (473 aa).

Positions 11–21 (PSPTGYLHIGG) match the 'HIGH' region motif. Residues 113–133 (KARAEGRPPRYDGRWRDRDPS) show a composition bias toward basic and acidic residues. Residues 113-136 (KARAEGRPPRYDGRWRDRDPSEAP) form a disordered region. The 'KMSKS' region signature appears at 240–244 (KLSKR). Lys243 is an ATP binding site.

The protein belongs to the class-I aminoacyl-tRNA synthetase family. Glutamate--tRNA ligase type 1 subfamily. As to quaternary structure, monomer.

The protein resides in the cytoplasm. It carries out the reaction tRNA(Glu) + L-glutamate + ATP = L-glutamyl-tRNA(Glu) + AMP + diphosphate. Its function is as follows. Catalyzes the attachment of glutamate to tRNA(Glu) in a two-step reaction: glutamate is first activated by ATP to form Glu-AMP and then transferred to the acceptor end of tRNA(Glu). The protein is Glutamate--tRNA ligase 1 of Brucella melitensis biotype 1 (strain ATCC 23456 / CCUG 17765 / NCTC 10094 / 16M).